We begin with the raw amino-acid sequence, 762 residues long: Serine/threonine-protein kinase PLK4 (762 aa).

A Protein kinase domain is found at 14 to 268; the sequence is YEVQHLLGKG…LEQVLRHPFM (255 aa). ATP-binding positions include 20-28 and K43; that span reads LGKGGFACV. Catalysis depends on D139, which acts as the Proton acceptor. Positions 383–498 constitute a Cryptic POLO box 1 (CPB1) domain; sequence AECISMPPLN…ARFVSLVKSK (116 aa). The Cryptic POLO box 2 (CPB2) domain occupies 499–602; sequence TPKVTYFSGL…GRRPTPEVMP (104 aa). A POLO box domain is found at 657–736; that stretch reads PIKRLNVPGV…LPQVQMKLKS (80 aa).

Belongs to the protein kinase superfamily. Ser/Thr protein kinase family. CDC5/Polo subfamily. As to quaternary structure, homodimer. Post-translationally, ubiquitinated by the SCF(Slimb) ubiquitin ligase complex; leading to its degradation by the proteasome during interphase and regulating centriole number and ensuring the block to centriole reduplication.

It is found in the cytoplasm. The protein localises to the cytoskeleton. Its subcellular location is the microtubule organizing center. It localises to the centrosome. The protein resides in the centriole. It catalyses the reaction L-seryl-[protein] + ATP = O-phospho-L-seryl-[protein] + ADP + H(+). It carries out the reaction L-threonyl-[protein] + ATP = O-phospho-L-threonyl-[protein] + ADP + H(+). Serine/threonine-protein kinase that plays a central role in centriole duplication. Able to trigger procentriole formation on the surface of the mother centriole cylinder, using mother centriole as a platform, leading to the recruitment of centriole biogenesis proteins such as sas-6. When overexpressed, it is able to induce centrosome amplification through the simultaneous generation of multiple procentrioles adjoining each parental centriole during S phase. Centrosome amplification following overexpression can initiate tumorigenesis, highlighting the importance of centrosome regulation in cancers. The chain is Serine/threonine-protein kinase PLK4 (SAK) from Drosophila grimshawi (Hawaiian fruit fly).